We begin with the raw amino-acid sequence, 75 residues long: Guanine nucleotide-binding protein G(I)/G(S)/G(O) subunit gamma-3 (75 aa).

Phosphothreonine is present on Thr5. The residue at position 9 (Ser9) is a Phosphoserine. Thr10 carries the phosphothreonine modification. Position 12 is a phosphoserine (Ser12). Cysteine methyl ester is present on Cys72. Cys72 carries the S-geranylgeranyl cysteine lipid modification. A propeptide spans Ala73–Leu75 (removed in mature form).

It belongs to the G protein gamma family. As to quaternary structure, g proteins are composed of 3 units, alpha, beta and gamma. Forms a complex with GNAO1 and GNB1. Interacts with SCN8A. In terms of tissue distribution, abundantly expressed in brain. Low levels in testis.

It is found in the cell membrane. Its function is as follows. Guanine nucleotide-binding proteins (G proteins) are involved as a modulator or transducer in various transmembrane signaling systems. The beta and gamma chains are required for the GTPase activity, for replacement of GDP by GTP, and for G protein-effector interaction. The polypeptide is Guanine nucleotide-binding protein G(I)/G(S)/G(O) subunit gamma-3 (GNG3) (Bos taurus (Bovine)).